The primary structure comprises 367 residues: UDP-N-acetylglucosamine--N-acetylmuramyl-(pentapeptide) pyrophosphoryl-undecaprenol N-acetylglucosamine transferase (367 aa).

UDP-N-acetyl-alpha-D-glucosamine-binding positions include 11-13 (TAG), N125, R163, S197, and Q289.

Belongs to the glycosyltransferase 28 family. MurG subfamily.

The protein localises to the cell membrane. The catalysed reaction is di-trans,octa-cis-undecaprenyl diphospho-N-acetyl-alpha-D-muramoyl-L-alanyl-D-glutamyl-meso-2,6-diaminopimeloyl-D-alanyl-D-alanine + UDP-N-acetyl-alpha-D-glucosamine = di-trans,octa-cis-undecaprenyl diphospho-[N-acetyl-alpha-D-glucosaminyl-(1-&gt;4)]-N-acetyl-alpha-D-muramoyl-L-alanyl-D-glutamyl-meso-2,6-diaminopimeloyl-D-alanyl-D-alanine + UDP + H(+). Its pathway is cell wall biogenesis; peptidoglycan biosynthesis. Cell wall formation. Catalyzes the transfer of a GlcNAc subunit on undecaprenyl-pyrophosphoryl-MurNAc-pentapeptide (lipid intermediate I) to form undecaprenyl-pyrophosphoryl-MurNAc-(pentapeptide)GlcNAc (lipid intermediate II). The protein is UDP-N-acetylglucosamine--N-acetylmuramyl-(pentapeptide) pyrophosphoryl-undecaprenol N-acetylglucosamine transferase of Clavibacter michiganensis subsp. michiganensis (strain NCPPB 382).